Consider the following 510-residue polypeptide: MGCDGRVSELLRRNLQPTLTYWSVFFSFGLCIAFLGPTLLDLRCQTHSSLPQISWVFFSQQLCLLLGSALGGVFKRTLAQSLWALFTSTLVISLVFAVIPFCHDVKVLASVIALAGLAMGCIDTVANMQLVRIYQKDSAFFLQVLHFFVGLGALLSPLIADPFLSEANCFPANNTANATSRSHGSRVLSQHHAAAQPWINQTIPRLPPKEVTENHVSYAFWIMALINLPVPLAVLFLLSKERLLTCAQRKPLLLSADELALETRPAEKEDTSSLAPKFQPHSGQEDLFSCCQRKNFRGAPCSFFAIHITAALVLFMTDGMMGAYSAFVYSYAVEKPLSIGHKSAGYLPSLFWGFITLGRFISIPVSSRMRPATMVFINVVGVVVTFLMLLIFSYNVIFLFVGTASLGLFLSSTFPSMLAYTEDILQYKGCATTVLVTGAGIGEMVLQMLVGLIFQAQGSYSFLVCGVIFGCLAFIFYILLLFFHRIHPELSSVLTQDKALGVENPECYQR.

The next 12 helical transmembrane spans lie at 19-39 (LTYW…GPTL), 53-73 (ISWV…LGGV), 82-102 (LWAL…IPFC), 107-127 (VLAS…TVAN), 139-159 (AFFL…SPLI), 218-238 (YAFW…LFLL), 303-323 (FFAI…MMGA), 345-365 (GYLP…SIPV), 380-400 (VGVV…IFLF), 401-421 (VGTA…LAYT), 434-454 (VLVT…GLIF), and 462-482 (FLVC…LLLF).

The protein belongs to the major facilitator superfamily.

Its subcellular location is the membrane. In Mus musculus (Mouse), this protein is Major facilitator superfamily domain-containing protein 4A.